We begin with the raw amino-acid sequence, 437 residues long: Beta-1,3-galactosyl-O-glycosyl-glycoprotein beta-1,6-N-acetylglucosaminyltransferase 3 (437 aa).

Topologically, residues 1 to 6 are cytoplasmic; the sequence is MVSWRR. Residues 7 to 27 form a helical; Signal-anchor for type II membrane protein membrane-spanning segment; the sequence is FCWHYHGWTLGCYMLLAIIAL. The Lumenal segment spans residues 28–437; the sequence is KLSLRLKCDF…RHKAIYGTEL (410 aa). 4 cysteine pairs are disulfide-bonded: C70/C227, C161/C381, C182/C209, and C390/C422. N288 carries N-linked (GlcNAc...) asparagine glycosylation.

The protein belongs to the glycosyltransferase 14 family. Post-translationally, N-glycosylated.

The protein resides in the golgi apparatus membrane. It catalyses the reaction a 3-O-[beta-D-galactosyl-(1-&gt;3)-N-acetyl-alpha-D-galactosaminyl]-L-seryl-[protein] + UDP-N-acetyl-alpha-D-glucosamine = 3-O-{beta-D-galactosyl-(1-&gt;3)-[N-acetyl-beta-D-glucosaminyl-(1-&gt;6)]-N-acetyl-alpha-D-galactosaminyl}-L-seryl-[protein] + UDP + H(+). The catalysed reaction is a 3-O-[beta-D-galactosyl-(1-&gt;3)-N-acetyl-alpha-D-galactosaminyl]-L-threonyl-[protein] + UDP-N-acetyl-alpha-D-glucosamine = a 3-O-{beta-D-galactosyl-(1-&gt;3)-[N-acetyl-beta-D-glucosaminyl-(1-&gt;6)]-N-acetyl-alpha-D-galactosaminyl}-L-threonyl-[protein] + UDP + H(+). The enzyme catalyses a beta-D-Gal-(1-&gt;4)-beta-D-GlcNAc-(1-&gt;3)-beta-D-Gal-(1-&gt;4)-beta-D-GlcNAc derivative + UDP-N-acetyl-alpha-D-glucosamine = a beta-D-Gal-(1-&gt;4)-beta-D-GlcNAc-(1-&gt;3)-[beta-D-GlcNAc-(1-&gt;6)]-beta-D-Gal-(1-&gt;4)-N-acetyl-beta-D-glucosaminyl derivative + UDP + H(+). It carries out the reaction 3-O-[N-acetyl-beta-D-glucosaminyl-(1-&gt;3)-N-acetyl-alpha-D-galactosaminyl]-L-seryl-[protein] + UDP-N-acetyl-alpha-D-glucosamine = 3-O-[N-acetyl-beta-D-glucosaminyl-(1-&gt;3)-[N-acetyl-beta-D-glucosaminyl-(1-&gt;6)]-N-acetyl-alpha-D-galactosaminyl]-L-seryl-[protein] + UDP + H(+). It catalyses the reaction a 3-O-[N-acetyl-beta-D-glucosaminyl-(1-&gt;3)-N-acetyl-alpha-D-galactosaminyl]-L-threonyl-[protein] + UDP-N-acetyl-alpha-D-glucosamine = 3-O-[N-acetyl-beta-D-glucosaminyl-(1-&gt;3)-[N-acetyl-beta-D-glucosaminyl-(1-&gt;6)]-N-acetyl-alpha-D-galactosaminyl]-L-threonyl-[protein] + UDP + H(+). The protein operates within protein modification; protein glycosylation. Its function is as follows. Glycosyltransferase that can synthesize all known mucin beta 6 N-acetylglucosaminides. Mediates core 2 and core 4 O-glycan branching, 2 important steps in mucin-type biosynthesis. Also has I-branching enzyme activity by converting linear into branched poly-N-acetyllactosaminoglycans, leading to introduce the blood group I antigen during embryonic development. This is Beta-1,3-galactosyl-O-glycosyl-glycoprotein beta-1,6-N-acetylglucosaminyltransferase 3 (Gcnt3) from Rattus norvegicus (Rat).